Reading from the N-terminus, the 595-residue chain is Adenine deaminase (595 aa).

It belongs to the metallo-dependent hydrolases superfamily. Adenine deaminase family. Homodimer. Mn(2+) serves as cofactor.

The catalysed reaction is adenine + H2O + H(+) = hypoxanthine + NH4(+). In Serratia proteamaculans (strain 568), this protein is Adenine deaminase.